The primary structure comprises 157 residues: UPF0212 protein rrnAC1165 (157 aa).

The segment at 105-157 (VLEIEEIPEESDETTEDESSSAESEADADDPPSDQSADESDDVLPEFEELIDE) is disordered. Residues 106–157 (LEIEEIPEESDETTEDESSSAESEADADDPPSDQSADESDDVLPEFEELIDE) show a composition bias toward acidic residues.

Belongs to the UPF0212 family.

This is UPF0212 protein rrnAC1165 from Haloarcula marismortui (strain ATCC 43049 / DSM 3752 / JCM 8966 / VKM B-1809) (Halobacterium marismortui).